Here is a 1465-residue protein sequence, read N- to C-terminus: DNA polymerase III PolC-type (1465 aa).

In terms of domain architecture, Exonuclease spans 427–583 (YVVFDVETTG…YDAEATGRLL (157 aa)).

The protein belongs to the DNA polymerase type-C family. PolC subfamily.

It is found in the cytoplasm. It carries out the reaction DNA(n) + a 2'-deoxyribonucleoside 5'-triphosphate = DNA(n+1) + diphosphate. Required for replicative DNA synthesis. This DNA polymerase also exhibits 3' to 5' exonuclease activity. The protein is DNA polymerase III PolC-type of Streptococcus pyogenes serotype M1.